Reading from the N-terminus, the 294-residue chain is MTTNKYIATPSRTKDILGKYHFTFKKSLGQNFLVDVSVLQNIIRHAGITKDTAAIEIGPGIGALTEQLAIHADQVVAFEIDQRLLPILQDTLGEYSNVSVIHQDILKADVTKVIDEHFKEGQEVHVVANLPYYITTPILMKLIRDRLPVTSLTVMIQKEVADRMSGEPNSKSYGSLSLAVQYYSEAKVVMNVPKQVFMPQPNVDSSILQLTMRKQPPVEVTDEDFFFEIIQASFAQRRKTLKNNLTRFFKGVHDKEKIDHILQEAGVEGIRRGESLTMEEFAQVANTFYQYQSK.

S-adenosyl-L-methionine-binding residues include Asn-31, Leu-33, Gly-58, Glu-79, Asp-104, and Asn-129.

Belongs to the class I-like SAM-binding methyltransferase superfamily. rRNA adenine N(6)-methyltransferase family. RsmA subfamily.

It localises to the cytoplasm. The catalysed reaction is adenosine(1518)/adenosine(1519) in 16S rRNA + 4 S-adenosyl-L-methionine = N(6)-dimethyladenosine(1518)/N(6)-dimethyladenosine(1519) in 16S rRNA + 4 S-adenosyl-L-homocysteine + 4 H(+). Specifically dimethylates two adjacent adenosines (A1518 and A1519) in the loop of a conserved hairpin near the 3'-end of 16S rRNA in the 30S particle. May play a critical role in biogenesis of 30S subunits. The sequence is that of Ribosomal RNA small subunit methyltransferase A from Oceanobacillus iheyensis (strain DSM 14371 / CIP 107618 / JCM 11309 / KCTC 3954 / HTE831).